The sequence spans 105 residues: Cyclotide vibi-E (105 aa).

The first 9 residues, 1–9 (AAFALPALA), serve as a signal peptide directing secretion. Residues 10–69 (SSFEKDVISFRAIQAVLEKRGLSKLEDDPVLSALAHTKTIISNPVIEEALLNGANLKAGN) constitute a propeptide that is removed on maturation. The cyclopeptide (Gly-Asn) cross-link spans 70–99 (GIPCAESCVWIPCTVTALIGCGCSNKVCYN). Disulfide bonds link cysteine 73/cysteine 90, cysteine 77/cysteine 92, and cysteine 82/cysteine 97. The propeptide occupies 100–105 (SLQTKY).

This is a cyclic peptide.

Its function is as follows. Probably participates in a plant defense mechanism. Has cytotoxic activity, active against a human lymphoma cell line with an IC(50) of 3.2 uM. This chain is Cyclotide vibi-E, found in Viola biflora (Yellow wood violet).